The chain runs to 214 residues: MRFPSDLCPSSGTGELSARSQVRWRLCWENELELADHAELAEFLRKAYNPSGTFNARPFEGGRSWAGARPEVRAIGYDSRGVAAHIAALRRFIKVGAVDLLVAELGLYAVRPDLEGLRISHSMLVMYPALKELGVPFGFGTVRHALQKHLTRLLGKAGLATIVSGVRVRSTLRDMRLDMPPTRVEDLLILVFPIGRPMSDWPAGTIIDRNGPEL.

It belongs to the NodA family.

It localises to the cytoplasm. Functionally, N-acyltransferase required for nodulation. Acts in the production of a small, heat-stable compound (Nod) that stimulates mitosis in various plant protoplasts. The chain is Nodulation protein A from Methylobacterium nodulans (strain LMG 21967 / CNCM I-2342 / ORS 2060).